The following is a 512-amino-acid chain: Cytochrome P450 monooxygenase TwmD (512 aa).

Cysteine 454 is a binding site for heme.

It belongs to the cytochrome P450 family. Requires heme as cofactor.

It participates in secondary metabolite biosynthesis. Its function is as follows. Cytochrome P450 monooxygenase; part of the gene cluster that mediates the biosynthesis of wortmanamides A and B, reduced long-chain polyketides amidated with a specific omega-amino acid, 5-aminopentanoic acid (5PA). The PKS modules of TwmB are involved in the synthesis of the polyketide backbone, whereas the non-canonical C domain of TwmB is a bonafide condensation domain that specifically selects 5PA and catalyzes amidation to release polyketide chain. The C domain clearly prefers C16 and C18 fatty acyl substrates, which is consistent with simultaneous formation of both octaketide and nonaketide acyl amides wortmanamides A and B. Because TwmB lacks a designated enoylreductase (ER) domain, the required activity is provided the enoyl reductase TwmE. The roles of the remaining enzymes have still to be clarified. The polypeptide is Cytochrome P450 monooxygenase TwmD (Talaromyces wortmannii (Penicillium wortmannii)).